The primary structure comprises 293 residues: SAGA-associated factor 29 (293 aa).

The stretch at 3–86 forms a coiled coil; it reads LVSADSRIAE…LRKALDKIAE (84 aa). Residues 152–293 form the SGF29 C-terminal domain; the sequence is GDYVAKPGDK…VVACKEPKKK (142 aa). 2 histone H3K4me3 N-terminus binding regions span residues 194 to 196 and 240 to 243; these read DID and QTTC. A histone H3K4me3 binding region spans residues 264–266; that stretch reads FED. At Lys-288 the chain carries N6-acetyllysine.

Belongs to the SGF29 family. As to quaternary structure, interacts with dimethylated and trimethylated 'Lys-4' of histone H3 (H3K4me2 and H3K4me3), with a preference for the trimethylated form (H3K4me3). Component of some SAGA-type complexes. Component of the ADA2A-containing complex (ATAC), composed of KAT14, KAT2A, TADA2L, TADA3L, ZZ3, MBIP, WDR5, YEATS2, CCDC101 and DR1. Interacts with (methylated) CGAS. Interacts with TADA3L, GCN5L2, SUPT3H and MYC.

The protein localises to the nucleus. In terms of biological role, chromatin reader component of some histone acetyltransferase (HAT) SAGA-type complexes like the TFTC-HAT, ATAC or STAGA complexes. SGF29 specifically recognizes and binds methylated 'Lys-4' of histone H3 (H3K4me), with a preference for trimethylated form (H3K4me3). In the SAGA-type complexes, SGF29 is required to recruit complexes to H3K4me. Involved in the response to endoplasmic reticulum (ER) stress by recruiting the SAGA complex to H3K4me, thereby promoting histone H3 acetylation and cell survival. Also binds non-histone proteins that are methylated on Lys residues: specifically recognizes and binds CGAS monomethylated on 'Lys-491'. This is SAGA-associated factor 29 from Mus musculus (Mouse).